The primary structure comprises 234 residues: GTP cyclohydrolase 1 (234 aa).

The tract at residues 1–26 (MDALIKPLRAGKPDAKPADPKGTEFR) is disordered. A compositionally biased stretch (basic and acidic residues) spans 11-26 (GKPDAKPADPKGTEFR). Positions 123, 126, and 194 each coordinate Zn(2+).

The protein belongs to the GTP cyclohydrolase I family. As to quaternary structure, toroid-shaped homodecamer, composed of two pentamers of five dimers.

The catalysed reaction is GTP + H2O = 7,8-dihydroneopterin 3'-triphosphate + formate + H(+). It participates in cofactor biosynthesis; 7,8-dihydroneopterin triphosphate biosynthesis; 7,8-dihydroneopterin triphosphate from GTP: step 1/1. In Rhodopseudomonas palustris (strain BisB18), this protein is GTP cyclohydrolase 1.